The chain runs to 53 residues: Kunitz-type trypsin inhibitor alpha chain (53 aa).

The tract at residues 33–53 (GWGLPRRTGDESCPLNVKAVR) is disordered.

The protein belongs to the protease inhibitor I3 (leguminous Kunitz-type inhibitor) family. As to quaternary structure, heterodimer of an alpha and a beta chain linked by a disulfide bond.

Functionally, inhibits trypsin with a Ki of 0.25 uM. Inhibits the trypsin-like proteases in midguts of larval H.armigera, S.exigua, and P.rapae. This Albizia kalkora (Kalkora mimosa) protein is Kunitz-type trypsin inhibitor alpha chain.